A 206-amino-acid chain; its full sequence is FMN-dependent NADH:quinone oxidoreductase 1 (206 aa).

FMN contacts are provided by residues serine 10 and 16 to 18; that span reads SLS.

The protein belongs to the azoreductase type 1 family. Homodimer. It depends on FMN as a cofactor.

The catalysed reaction is 2 a quinone + NADH + H(+) = 2 a 1,4-benzosemiquinone + NAD(+). It catalyses the reaction N,N-dimethyl-1,4-phenylenediamine + anthranilate + 2 NAD(+) = 2-(4-dimethylaminophenyl)diazenylbenzoate + 2 NADH + 2 H(+). Its function is as follows. Quinone reductase that provides resistance to thiol-specific stress caused by electrophilic quinones. Functionally, also exhibits azoreductase activity. Catalyzes the reductive cleavage of the azo bond in aromatic azo compounds to the corresponding amines. The polypeptide is FMN-dependent NADH:quinone oxidoreductase 1 (Burkholderia lata (strain ATCC 17760 / DSM 23089 / LMG 22485 / NCIMB 9086 / R18194 / 383)).